The primary structure comprises 154 residues: SsrA-binding protein (154 aa).

The disordered stretch occupies residues 134 to 154 (KRQAIKERQTQREIQRELKER).

It belongs to the SmpB family.

It localises to the cytoplasm. Required for rescue of stalled ribosomes mediated by trans-translation. Binds to transfer-messenger RNA (tmRNA), required for stable association of tmRNA with ribosomes. tmRNA and SmpB together mimic tRNA shape, replacing the anticodon stem-loop with SmpB. tmRNA is encoded by the ssrA gene; the 2 termini fold to resemble tRNA(Ala) and it encodes a 'tag peptide', a short internal open reading frame. During trans-translation Ala-aminoacylated tmRNA acts like a tRNA, entering the A-site of stalled ribosomes, displacing the stalled mRNA. The ribosome then switches to translate the ORF on the tmRNA; the nascent peptide is terminated with the 'tag peptide' encoded by the tmRNA and targeted for degradation. The ribosome is freed to recommence translation, which seems to be the essential function of trans-translation. The polypeptide is SsrA-binding protein (Synechococcus sp. (strain JA-2-3B'a(2-13)) (Cyanobacteria bacterium Yellowstone B-Prime)).